Consider the following 91-residue polypeptide: Antifungal protein opdH (91 aa).

The first 18 residues, 1–18 (MQFSSLSLVFLAVIGAIA), serve as a signal peptide directing secretion. A propeptide spanning residues 19-33 (NPIAVDSELENRDVQ) is cleaved from the precursor. Intrachain disulfides connect C41-C69, C48-C76, and C61-C87.

The protein belongs to the antifungal protein pafB family.

The protein resides in the secreted. It localises to the host cytoplasm. Functionally, antifungal protein; part of the gene cluster that mediates the biosynthesis of oxopyrrolidines, polyketide-amino acid hybrid compounds with feature structures of tetramic acid. Acts as an inhibitor of growth of various molds and yeasts. The protein is Antifungal protein opdH of Penicillium oxalicum (strain 114-2 / CGMCC 5302) (Penicillium decumbens).